The following is a 447-amino-acid chain: C4-dicarboxylate transport protein (447 aa).

8 helical membrane passes run 22–42 (FQVI…PLVG), 52–72 (FINL…VTGI), 90–110 (AYFL…AHVV), 159–179 (GNIL…ASVG), 199–219 (LVHI…AFTI), 232–252 (WLVG…LGVV), 325–347 (LFIA…LLVA), and 366–386 (AATL…ILGV).

This sequence belongs to the dicarboxylate/amino acid:cation symporter (DAACS) (TC 2.A.23) family.

It localises to the cell inner membrane. Functionally, responsible for the transport of dicarboxylates such as succinate, fumarate, and malate from the periplasm across the membrane. In Stenotrophomonas maltophilia (strain R551-3), this protein is C4-dicarboxylate transport protein.